Here is a 460-residue protein sequence, read N- to C-terminus: Argininosuccinate lyase (460 aa).

This sequence belongs to the lyase 1 family. Argininosuccinate lyase subfamily.

The protein localises to the cytoplasm. The catalysed reaction is 2-(N(omega)-L-arginino)succinate = fumarate + L-arginine. It functions in the pathway amino-acid biosynthesis; L-arginine biosynthesis; L-arginine from L-ornithine and carbamoyl phosphate: step 3/3. The polypeptide is Argininosuccinate lyase (Streptococcus uberis (strain ATCC BAA-854 / 0140J)).